The following is a 505-amino-acid chain: Putative heat shock protein HSP 90-beta 4 (505 aa).

The ATP site is built by Asn22, Lys83, and Phe109. The tract at residues 197–248 (EKEISDDEEEKGEKEEEDKDDKEKPKTEDVGSDEEDDTDKNNKKKTKKIKEK) is disordered. Positions 200–216 (ISDDEEEKGEKEEEDKD) are enriched in acidic residues.

It belongs to the heat shock protein 90 family. Homodimer.

The protein resides in the cytoplasm. In terms of biological role, putative molecular chaperone that may promote the maturation, structural maintenance and proper regulation of specific target proteins. This Homo sapiens (Human) protein is Putative heat shock protein HSP 90-beta 4 (HSP90AB4P).